A 452-amino-acid chain; its full sequence is UDP-N-acetylmuramoylalanine--D-glutamate ligase (452 aa).

119 to 125 (GSNGKTT) is a binding site for ATP.

The protein belongs to the MurCDEF family.

It localises to the cytoplasm. It carries out the reaction UDP-N-acetyl-alpha-D-muramoyl-L-alanine + D-glutamate + ATP = UDP-N-acetyl-alpha-D-muramoyl-L-alanyl-D-glutamate + ADP + phosphate + H(+). Its pathway is cell wall biogenesis; peptidoglycan biosynthesis. Functionally, cell wall formation. Catalyzes the addition of glutamate to the nucleotide precursor UDP-N-acetylmuramoyl-L-alanine (UMA). The polypeptide is UDP-N-acetylmuramoylalanine--D-glutamate ligase (Streptococcus pyogenes serotype M5 (strain Manfredo)).